The primary structure comprises 405 residues: Argininosuccinate synthase (405 aa).

8 to 16 contacts ATP; sequence AYSGGLDTS. Y86 and S91 together coordinate L-citrulline. Residue G116 participates in ATP binding. Residues T118, N122, and D123 each contribute to the L-aspartate site. N122 contributes to the L-citrulline binding site. Positions 126, 175, 184, 260, and 272 each coordinate L-citrulline.

It belongs to the argininosuccinate synthase family. Type 1 subfamily. Homotetramer.

It localises to the cytoplasm. It carries out the reaction L-citrulline + L-aspartate + ATP = 2-(N(omega)-L-arginino)succinate + AMP + diphosphate + H(+). The protein operates within amino-acid biosynthesis; L-arginine biosynthesis; L-arginine from L-ornithine and carbamoyl phosphate: step 2/3. In Koribacter versatilis (strain Ellin345), this protein is Argininosuccinate synthase.